The following is a 100-amino-acid chain: Large ribosomal subunit protein uL23 (100 aa).

This sequence belongs to the universal ribosomal protein uL23 family. As to quaternary structure, part of the 50S ribosomal subunit. Contacts protein L29, and trigger factor when it is bound to the ribosome.

One of the early assembly proteins it binds 23S rRNA. One of the proteins that surrounds the polypeptide exit tunnel on the outside of the ribosome. Forms the main docking site for trigger factor binding to the ribosome. In Colwellia psychrerythraea (strain 34H / ATCC BAA-681) (Vibrio psychroerythus), this protein is Large ribosomal subunit protein uL23.